A 509-amino-acid polypeptide reads, in one-letter code: Kynureninase 1 (509 aa).

Pyridoxal 5'-phosphate contacts are provided by residues L169, T170, 197–200 (FPSD), D283, H286, and Y308. K309 bears the N6-(pyridoxal phosphate)lysine mark. Pyridoxal 5'-phosphate is bound by residues W349 and N377.

This sequence belongs to the kynureninase family. In terms of assembly, homodimer. Pyridoxal 5'-phosphate is required as a cofactor.

It localises to the cytoplasm. The catalysed reaction is L-kynurenine + H2O = anthranilate + L-alanine + H(+). The enzyme catalyses 3-hydroxy-L-kynurenine + H2O = 3-hydroxyanthranilate + L-alanine + H(+). It functions in the pathway amino-acid degradation; L-kynurenine degradation; L-alanine and anthranilate from L-kynurenine: step 1/1. The protein operates within cofactor biosynthesis; NAD(+) biosynthesis; quinolinate from L-kynurenine: step 2/3. Functionally, catalyzes the cleavage of L-kynurenine (L-Kyn) and L-3-hydroxykynurenine (L-3OHKyn) into anthranilic acid (AA) and 3-hydroxyanthranilic acid (3-OHAA), respectively. This chain is Kynureninase 1 (bna5-1), found in Aspergillus fumigatus (strain CBS 144.89 / FGSC A1163 / CEA10) (Neosartorya fumigata).